The sequence spans 212 residues: MIIAIDGPAASGKGTLGKRLAAHYHFRHLDTGVIYRAVAKALLDAGADPADEARAIAAALELDPERFGHPALKARAIGEAASVVSTFPKVREALLTFQRQFAAEPPGAVLDGRDIGTVICPNADVKIFVEADPVVRARRRTLEARARGEEVDEAVVLADILKRDERDRNRPVAPLKAAADAHVLDNSNLDIEAGLKAAIAIVESVRVRSGRA.

7 to 15 (GPAASGKGT) contributes to the ATP binding site.

This sequence belongs to the cytidylate kinase family. Type 1 subfamily.

Its subcellular location is the cytoplasm. It carries out the reaction CMP + ATP = CDP + ADP. The enzyme catalyses dCMP + ATP = dCDP + ADP. This chain is Cytidylate kinase, found in Nitrobacter winogradskyi (strain ATCC 25391 / DSM 10237 / CIP 104748 / NCIMB 11846 / Nb-255).